Here is a 196-residue protein sequence, read N- to C-terminus: Rac-like GTP-binding protein RAC13 (196 aa).

13–20 (GDGAVGKT) is a binding site for GTP. Residues 35-43 (YVPTVFDNF) carry the Effector region motif. GTP-binding positions include 60–64 (DTAGQ) and 118–121 (TKLD). A Cysteine methyl ester modification is found at Cys193. Cys193 carries the S-geranylgeranyl cysteine lipid modification. The propeptide at 194-196 (AFL) is removed in mature form.

The protein belongs to the small GTPase superfamily. Rho family.

The protein localises to the cytoplasm. Its subcellular location is the membrane. Its function is as follows. Could participate in a signal transduction pathway that controls cytoskeletal organization. In terms of biological role, inactive GDP-bound Rho GTPases reside in the cytosol, are found in a complex with Rho GDP-dissociation inhibitors (Rho GDIs), and are released from the GDI protein in order to translocate to membranes upon activation. The protein is Rac-like GTP-binding protein RAC13 (RAC13) of Gossypium hirsutum (Upland cotton).